Consider the following 141-residue polypeptide: Small ribosomal subunit protein uS12 (141 aa).

The segment covering 1-11 has biased composition (polar residues); it reads MPTISQLVTTS. A disordered region spans residues 1 to 22; it reads MPTISQLVTTSRQDKNYKSKSP. Asp102 is subject to 3-methylthioaspartic acid.

Belongs to the universal ribosomal protein uS12 family. In terms of assembly, part of the 30S ribosomal subunit. Contacts proteins S8 and S17. May interact with IF1 in the 30S initiation complex.

In terms of biological role, with S4 and S5 plays an important role in translational accuracy. Interacts with and stabilizes bases of the 16S rRNA that are involved in tRNA selection in the A site and with the mRNA backbone. Located at the interface of the 30S and 50S subunits, it traverses the body of the 30S subunit contacting proteins on the other side and probably holding the rRNA structure together. The combined cluster of proteins S8, S12 and S17 appears to hold together the shoulder and platform of the 30S subunit. The sequence is that of Small ribosomal subunit protein uS12 from Acholeplasma laidlawii (strain PG-8A).